A 646-amino-acid polypeptide reads, in one-letter code: Threonine--tRNA ligase (646 aa).

Positions 1 to 61 constitute a TGS domain; the sequence is MIKITFPDGS…NEDANFVLYK (61 aa). The catalytic stretch occupies residues 242–541; it reads DHRKIGKEMD…LIEHTAGKFP (300 aa). C337, H388, and H518 together coordinate Zn(2+).

Belongs to the class-II aminoacyl-tRNA synthetase family. In terms of assembly, homodimer. It depends on Zn(2+) as a cofactor.

Its subcellular location is the cytoplasm. It catalyses the reaction tRNA(Thr) + L-threonine + ATP = L-threonyl-tRNA(Thr) + AMP + diphosphate + H(+). Catalyzes the attachment of threonine to tRNA(Thr) in a two-step reaction: L-threonine is first activated by ATP to form Thr-AMP and then transferred to the acceptor end of tRNA(Thr). Also edits incorrectly charged L-seryl-tRNA(Thr). This chain is Threonine--tRNA ligase, found in Phocaeicola vulgatus (strain ATCC 8482 / DSM 1447 / JCM 5826 / CCUG 4940 / NBRC 14291 / NCTC 11154) (Bacteroides vulgatus).